Here is a 421-residue protein sequence, read N- to C-terminus: Serine/threonine-protein kinase OXI1 (421 aa).

Residues 17 to 329 form the Protein kinase domain; sequence LEVLSLLGRG…VEEIKGHDFF (313 aa). Residues 23–31 and K45 contribute to the ATP site; that span reads LGRGAKGVV. The active-site Proton acceptor is the D149. An activation loop region spans residues 167-246; it reads DFDLSTNLAP…VGTEEYVAPE (80 aa). S235 carries the post-translational modification Phosphoserine; by PDPK1. The region spanning 330–421 is the AGC-kinase C-terminal domain; the sequence is RGVDWEKVIL…LESDNNFLVF (92 aa). The PIF signature appears at 418 to 421; that stretch reads FLVF.

Belongs to the protein kinase superfamily. AGC Ser/Thr protein kinase family. In terms of assembly, interacts with PDK1 and PDK2. Expressed in roots and root hair cells.

The enzyme catalyses L-seryl-[protein] + ATP = O-phospho-L-seryl-[protein] + ADP + H(+). It catalyses the reaction L-threonyl-[protein] + ATP = O-phospho-L-threonyl-[protein] + ADP + H(+). Its activity is regulated as follows. Activated in response to hydrogen peroxide and cellulase elicitor. Activated by PDK1 in a phosphatidic acid dependent manner. Its function is as follows. Involved in oxidative burst-mediated signaling. Required for basal resistance to P.parasitica infection and root hair growth. Partly required for the activation of MPK3 and MPK6 by hydrogen peroxide and cellulase elicitor. In Arabidopsis thaliana (Mouse-ear cress), this protein is Serine/threonine-protein kinase OXI1.